The sequence spans 181 residues: CASP-like protein 2C1 (181 aa).

Residues 1 to 7 (MALEIPK) lie on the Cytoplasmic side of the membrane. Residues 8 to 28 (IEAILRGIAILLLVSTACLVG) form a helical membrane-spanning segment. The Extracellular segment spans residues 29-49 (LDSQTKFVIVYEKEVTYKDLH). Residues 50 to 70 (ALVVLVYVDAVAAAYNLLQLC) traverse the membrane as a helical segment. The Cytoplasmic segment spans residues 71-98 (RCSVSALSKGNFKGSYRYLSWACFVLDQ). A helical transmembrane segment spans residues 99-119 (LAAYTTFAAHSAALQHSVLGI). The Extracellular segment spans residues 120–140 (TGAKVFQWMKWCNRFTRFCFQ). A helical membrane pass occupies residues 141 to 161 (IGGALTCGYIASVLMVMISFI). Topologically, residues 162–181 (SAFNLFRLYSPKHFLRLKGT) are cytoplasmic.

It belongs to the Casparian strip membrane proteins (CASP) family. In terms of assembly, homodimer and heterodimers.

Its subcellular location is the cell membrane. This is CASP-like protein 2C1 from Populus trichocarpa (Western balsam poplar).